The sequence spans 89 residues: Small ribosomal subunit protein uS15 (89 aa).

It belongs to the universal ribosomal protein uS15 family. As to quaternary structure, part of the 30S ribosomal subunit. Forms a bridge to the 50S subunit in the 70S ribosome, contacting the 23S rRNA.

In terms of biological role, one of the primary rRNA binding proteins, it binds directly to 16S rRNA where it helps nucleate assembly of the platform of the 30S subunit by binding and bridging several RNA helices of the 16S rRNA. Its function is as follows. Forms an intersubunit bridge (bridge B4) with the 23S rRNA of the 50S subunit in the ribosome. The chain is Small ribosomal subunit protein uS15 from Azoarcus sp. (strain BH72).